The primary structure comprises 160 residues: Ribosome maturation factor RimP (160 aa).

This sequence belongs to the RimP family.

It localises to the cytoplasm. Its function is as follows. Required for maturation of 30S ribosomal subunits. This is Ribosome maturation factor RimP from Syntrophus aciditrophicus (strain SB).